A 100-amino-acid chain; its full sequence is Urease subunit gamma (100 aa).

This sequence belongs to the urease gamma subunit family. Heterotrimer of UreA (gamma), UreB (beta) and UreC (alpha) subunits. Three heterotrimers associate to form the active enzyme.

Its subcellular location is the cytoplasm. It carries out the reaction urea + 2 H2O + H(+) = hydrogencarbonate + 2 NH4(+). It participates in nitrogen metabolism; urea degradation; CO(2) and NH(3) from urea (urease route): step 1/1. The polypeptide is Urease subunit gamma (Rhizobium etli (strain CIAT 652)).